A 190-amino-acid chain; its full sequence is Heme-binding protein 1 (190 aa).

It belongs to the HEBP family. As to quaternary structure, monomer.

It localises to the cytoplasm. May bind free porphyrinogens that may be present in the cell and thus facilitate removal of these potentially toxic compound. Binds with a high affinity to one molecule of heme or porphyrins. It binds metalloporphyrins, free porphyrins and N-methylprotoporphyrin with similar affinities. The protein is Heme-binding protein 1 (hebp1) of Xenopus laevis (African clawed frog).